Here is a 150-residue protein sequence, read N- to C-terminus: 3-hydroxyacyl-[acyl-carrier-protein] dehydratase FabZ (150 aa).

His54 is a catalytic residue.

The protein belongs to the thioester dehydratase family. FabZ subfamily.

It localises to the cytoplasm. It catalyses the reaction a (3R)-hydroxyacyl-[ACP] = a (2E)-enoyl-[ACP] + H2O. Its function is as follows. Involved in unsaturated fatty acids biosynthesis. Catalyzes the dehydration of short chain beta-hydroxyacyl-ACPs and long chain saturated and unsaturated beta-hydroxyacyl-ACPs. The chain is 3-hydroxyacyl-[acyl-carrier-protein] dehydratase FabZ from Vibrio atlanticus (strain LGP32) (Vibrio splendidus (strain Mel32)).